A 260-amino-acid chain; its full sequence is MSFLHVDHVTHTYFSIKEKTTAVRDIHFDAEKGDFISFLGPSGCGKTTLLSIIAGLIEPSEGRVLIEGREPNQKEHNIGYMLQQDYLFPWKSIEENVLLGLKIADTLTEESKAAALGLLPEFGLIDVEKKYPKELSGGMRQRAALARTLAPNPSLLLLDEPFSALDFQTKLSLENLVFRTLKEYQKTAVLVTHDIGEAIAMSDTIFLFSNQPGTIHQIFTIPKELAAMLPFDARQEPSFQTLFQTIWKELNSLEKQQRNH.

In terms of domain architecture, ABC transporter spans 4 to 231 (LHVDHVTHTY…PKELAAMLPF (228 aa)). Position 40 to 47 (40 to 47 (GPSGCGKT)) interacts with ATP.

It belongs to the ABC transporter superfamily.

This is an uncharacterized protein from Bacillus subtilis (strain 168).